We begin with the raw amino-acid sequence, 448 residues long: MKKEKTERTKQSWRKAQNAPSLSEVNNSVAIPKNAKFFRKLFAFMGPGALIAVGYVDPGNWATSIAGGSEFGYTLLSVILISNILAVLLQSLASKLGIVTGRDLAQASSDHFSKPFGFVLWILAELAIIATDIAEVIGSAIALNLLFGIPLIWGVCITALDIFLVLFLQHKGFRYIEVIVITLMVTILVCFGAEMVMSHPDMQAIAKGFIPQSEIVTNPAMLYIALGILGATVMPHNLYLHSSIVQTRQYARTKEGKREAIRFSFIDSTFSLTIALLINASILILAAAAFYTTGQHNVAGIEDAYKLLNPTLGSSIASTVFAVALLASGQNSTLTGTLAGQIVMEGFLNIRLKPVVRRLLTRVLAIVPAVIITALYGANGINELLIFSQVILSMQLSFAVIPLVMFTSDKQKMGEFVNSPWLKIVSWSVAIFIAFLNIYLLFYTLTSL.

Transmembrane regions (helical) follow at residues 41–61 (LFAF…PGNW), 69–89 (SEFG…AVLL), 117–137 (GFVL…AEVI), 147–167 (FGIP…LVLF), 176–196 (IEVI…AEMV), 215–235 (IVTN…TVMP), 270–290 (FSLT…AAAF), 307–327 (LLNP…ALLA), 363–383 (VLAI…GINE), 384–404 (LLIF…IPLV), and 424–444 (IVSW…LFYT).

This sequence belongs to the NRAMP family.

The protein localises to the cell membrane. In terms of biological role, h(+)-stimulated, divalent metal cation uptake system. The protein is Divalent metal cation transporter MntH of Listeria innocua serovar 6a (strain ATCC BAA-680 / CLIP 11262).